The following is a 203-amino-acid chain: Small ribosomal subunit protein uS4 (203 aa).

One can recognise an S4 RNA-binding domain in the interval 93 to 154; sequence RRLDNVVFRA…KSRNMDAVTD (62 aa).

The protein belongs to the universal ribosomal protein uS4 family. As to quaternary structure, part of the 30S ribosomal subunit. Contacts protein S5. The interaction surface between S4 and S5 is involved in control of translational fidelity.

Functionally, one of the primary rRNA binding proteins, it binds directly to 16S rRNA where it nucleates assembly of the body of the 30S subunit. Its function is as follows. With S5 and S12 plays an important role in translational accuracy. This is Small ribosomal subunit protein uS4 from Chlorobium luteolum (strain DSM 273 / BCRC 81028 / 2530) (Pelodictyon luteolum).